Reading from the N-terminus, the 383-residue chain is Succinyl-diaminopimelate desuccinylase (383 aa).

Histidine 68 provides a ligand contact to Zn(2+). Aspartate 70 is a catalytic residue. Aspartate 100 contributes to the Zn(2+) binding site. Glutamate 130 (proton acceptor) is an active-site residue. Zn(2+) contacts are provided by glutamate 131, glutamate 159, and histidine 352.

Belongs to the peptidase M20A family. DapE subfamily. Homodimer. Requires Zn(2+) as cofactor. Co(2+) is required as a cofactor.

It catalyses the reaction N-succinyl-(2S,6S)-2,6-diaminopimelate + H2O = (2S,6S)-2,6-diaminopimelate + succinate. The protein operates within amino-acid biosynthesis; L-lysine biosynthesis via DAP pathway; LL-2,6-diaminopimelate from (S)-tetrahydrodipicolinate (succinylase route): step 3/3. Catalyzes the hydrolysis of N-succinyl-L,L-diaminopimelic acid (SDAP), forming succinate and LL-2,6-diaminopimelate (DAP), an intermediate involved in the bacterial biosynthesis of lysine and meso-diaminopimelic acid, an essential component of bacterial cell walls. This Granulibacter bethesdensis (strain ATCC BAA-1260 / CGDNIH1) protein is Succinyl-diaminopimelate desuccinylase.